Reading from the N-terminus, the 227-residue chain is Phage shock protein A homolog (227 aa).

Residues 33-125 are a coiled coil; sequence LRNMNSDLAK…AQMRKMHDKL (93 aa). The tract at residues 191-211 is disordered; sequence SAPQDDMADLSAKYDTGGSSQ.

This sequence belongs to the PspA/Vipp/IM30 family.

This chain is Phage shock protein A homolog (ydjF), found in Bacillus subtilis (strain 168).